The primary structure comprises 81 residues: Photosystem I iron-sulfur center (81 aa).

4Fe-4S ferredoxin-type domains follow at residues 2-31 and 39-68; these read SHSV…MIPW and IASA…VRVY. Cys-11, Cys-14, Cys-17, Cys-21, Cys-48, Cys-51, Cys-54, and Cys-58 together coordinate [4Fe-4S] cluster.

As to quaternary structure, the eukaryotic PSI reaction center is composed of at least 11 subunits. Requires [4Fe-4S] cluster as cofactor.

The protein resides in the plastid thylakoid membrane. It carries out the reaction reduced [plastocyanin] + hnu + oxidized [2Fe-2S]-[ferredoxin] = oxidized [plastocyanin] + reduced [2Fe-2S]-[ferredoxin]. In terms of biological role, apoprotein for the two 4Fe-4S centers FA and FB of photosystem I (PSI); essential for photochemical activity. FB is the terminal electron acceptor of PSI, donating electrons to ferredoxin. The C-terminus interacts with PsaA/B/D and helps assemble the protein into the PSI complex. Required for binding of PsaD and PsaE to PSI. PSI is a plastocyanin-ferredoxin oxidoreductase, converting photonic excitation into a charge separation, which transfers an electron from the donor P700 chlorophyll pair to the spectroscopically characterized acceptors A0, A1, FX, FA and FB in turn. The protein is Photosystem I iron-sulfur center of Cuscuta obtusiflora (Peruvian dodder).